The following is a 110-amino-acid chain: U1-lycotoxin-Ls1ii (110 aa).

A signal peptide spans 1 to 20 (MKFVLLFGVLLVTLFSYSSA). The propeptide occupies 21–44 (EMLDDFDQADEDELLSLIEKEEAR). Disulfide bonds link Cys-47–Cys-62, Cys-54–Cys-71, Cys-61–Cys-89, and Cys-73–Cys-87.

It belongs to the neurotoxin 19 (CSTX) family. 03 subfamily. In terms of tissue distribution, expressed by the venom gland.

Its subcellular location is the secreted. The protein is U1-lycotoxin-Ls1ii of Lycosa singoriensis (Wolf spider).